The sequence spans 258 residues: Large ribosomal subunit protein uL15c (258 aa).

Residues 1-65 constitute a chloroplast transit peptide; sequence MSAASLIPVS…NVKSSGENVR (65 aa). The tract at residues 67–90 is disordered; sequence RLDNLGPQPGSRKRPKRKGRGIAA. Over residues 77–86 the composition is skewed to basic residues; sequence SRKRPKRKGR.

This sequence belongs to the universal ribosomal protein uL15 family. Part of the 50S ribosomal subunit.

It is found in the plastid. Its subcellular location is the chloroplast. This is Large ribosomal subunit protein uL15c (RPL15) from Pisum sativum (Garden pea).